The following is a 450-amino-acid chain: UPF0210 protein CPF_1748 (450 aa).

It belongs to the UPF0210 family. As to quaternary structure, homodimer.

This chain is UPF0210 protein CPF_1748, found in Clostridium perfringens (strain ATCC 13124 / DSM 756 / JCM 1290 / NCIMB 6125 / NCTC 8237 / Type A).